Reading from the N-terminus, the 131-residue chain is MNPTIYLSCLMVFSVFLLGKVNAENEDEFVTEKQRLFSVYGDSSVDEATKYRNIDSLVTFYDKYFTRLQLKPDLNTRAHDLLRRYKEENARVVLVDGTPAQGGFWLPLVKLLIVQLGVEIASEGVKRAIES.

The N-terminal stretch at 1–23 is a signal peptide; it reads MNPTIYLSCLMVFSVFLLGKVNA.

It belongs to the Turandot family.

The protein resides in the secreted. Functionally, a humoral factor that may play a role in stress tolerance. Requires Mekk1 expression in the fat body to regulate response to septic injury and consequent immune response. The protein is Protein Turandot M of Drosophila melanogaster (Fruit fly).